The sequence spans 177 residues: Alkyl hydroperoxide reductase AhpD (177 aa).

C131 acts as the Proton donor in catalysis. C131 and C134 are joined by a disulfide. Residue C134 is the Cysteine sulfenic acid (-SOH) intermediate of the active site.

Belongs to the AhpD family. As to quaternary structure, homotrimer.

It carries out the reaction N(6)-[(R)-dihydrolipoyl]-L-lysyl-[lipoyl-carrier protein] + a hydroperoxide = N(6)-[(R)-lipoyl]-L-lysyl-[lipoyl-carrier protein] + an alcohol + H2O. In terms of biological role, antioxidant protein with alkyl hydroperoxidase activity. Required for the reduction of the AhpC active site cysteine residues and for the regeneration of the AhpC enzyme activity. This chain is Alkyl hydroperoxide reductase AhpD, found in Streptomyces griseus subsp. griseus (strain JCM 4626 / CBS 651.72 / NBRC 13350 / KCC S-0626 / ISP 5235).